Reading from the N-terminus, the 781-residue chain is Translation initiation factor IF-2 (781 aa).

Residues 44 to 195 (RQLDNAVDGT…TPPKPKELPE (152 aa)) form a disordered region. Basic and acidic residues predominate over residues 53–65 (TNKKAEAPKKETT). The span at 66 to 81 (SNENGNSKGPNKPNMT) shows a compositional bias: polar residues. Low complexity predominate over residues 82-93 (NSNEKSNKPNKP). A compositionally biased stretch (polar residues) spans 115-126 (KPANTGNQTQAS). Low complexity predominate over residues 127–169 (GNQQAGGQKRNNNNNSNRPGGGNPNRPGGNNRPNRGGNFNNKG). Positions 282–451 (ERPPVVTIMG…LLVSEVEELK (170 aa)) constitute a tr-type G domain. The tract at residues 291 to 298 (GHVDHGKT) is G1. GTP is bound at residue 291–298 (GHVDHGKT). The tract at residues 316-320 (GITQH) is G2. Positions 337–340 (DTPG) are G3. Residues 337 to 341 (DTPGH) and 391 to 394 (NKID) each bind GTP. Positions 391–394 (NKID) are G4. The G5 stretch occupies residues 427 to 429 (SAK).

This sequence belongs to the TRAFAC class translation factor GTPase superfamily. Classic translation factor GTPase family. IF-2 subfamily.

It is found in the cytoplasm. One of the essential components for the initiation of protein synthesis. Protects formylmethionyl-tRNA from spontaneous hydrolysis and promotes its binding to the 30S ribosomal subunits. Also involved in the hydrolysis of GTP during the formation of the 70S ribosomal complex. This Listeria monocytogenes serotype 4a (strain HCC23) protein is Translation initiation factor IF-2.